A 461-amino-acid polypeptide reads, in one-letter code: Phosphoglucosamine mutase (461 aa).

Residue serine 107 is the Phosphoserine intermediate of the active site. Mg(2+)-binding residues include serine 107, aspartate 254, aspartate 256, and aspartate 258. Residue serine 107 is modified to Phosphoserine.

Belongs to the phosphohexose mutase family. It depends on Mg(2+) as a cofactor. Post-translationally, activated by phosphorylation.

The catalysed reaction is alpha-D-glucosamine 1-phosphate = D-glucosamine 6-phosphate. Catalyzes the conversion of glucosamine-6-phosphate to glucosamine-1-phosphate. The chain is Phosphoglucosamine mutase from Bifidobacterium longum subsp. infantis (strain ATCC 15697 / DSM 20088 / JCM 1222 / NCTC 11817 / S12).